The sequence spans 431 residues: Protein translocase subunit SecY (431 aa).

The next 10 membrane-spanning stretches (helical) occupy residues 18–38 (IIFT…PVPH), 64–84 (LFNF…SIII), 116–136 (FTIV…NNMA), 146–166 (VGTY…LMWL), 175–195 (VGNG…PQTI), 214–234 (IIKV…VIFI), 262–282 (LPLK…AFIT), 309–329 (PVGM…YAFV), 369–389 (FVGS…VNIA), and 390–410 (GLPS…GVAL).

Belongs to the SecY/SEC61-alpha family. In terms of assembly, component of the Sec protein translocase complex. Heterotrimer consisting of SecY, SecE and SecG subunits. The heterotrimers can form oligomers, although 1 heterotrimer is thought to be able to translocate proteins. Interacts with the ribosome. Interacts with SecDF, and other proteins may be involved. Interacts with SecA.

Its subcellular location is the cell membrane. The central subunit of the protein translocation channel SecYEG. Consists of two halves formed by TMs 1-5 and 6-10. These two domains form a lateral gate at the front which open onto the bilayer between TMs 2 and 7, and are clamped together by SecE at the back. The channel is closed by both a pore ring composed of hydrophobic SecY resides and a short helix (helix 2A) on the extracellular side of the membrane which forms a plug. The plug probably moves laterally to allow the channel to open. The ring and the pore may move independently. This is Protein translocase subunit SecY from Bacillus licheniformis (strain ATCC 14580 / DSM 13 / JCM 2505 / CCUG 7422 / NBRC 12200 / NCIMB 9375 / NCTC 10341 / NRRL NRS-1264 / Gibson 46).